A 134-amino-acid polypeptide reads, in one-letter code: Transmembrane protein 100 (134 aa).

Residues 1-24 are disordered; the sequence is MTEEPTKENLGGPKSPTPVTMEKS. Serine 15 carries the post-translational modification Phosphoserine. 2 consecutive transmembrane segments (helical) span residues 56 to 76 and 84 to 104; these read CIIP…AVAY and VISI…ASSA. Residue serine 121 is modified to Phosphoserine.

As to quaternary structure, interacts (via C-terminus) with TRPA1 and TRPV1. Interacts with TASOR.

The protein localises to the cell membrane. Its subcellular location is the membrane. It is found in the perikaryon. The protein resides in the cytoplasm. It localises to the perinuclear region. The protein localises to the endoplasmic reticulum. Its function is as follows. Plays a role during embryonic arterial endothelium differentiation and vascular morphogenesis through the ACVRL1 receptor-dependent signaling pathway upon stimulation by bone morphogenetic proteins, such as GDF2/BMP9 and BMP10. Involved in the regulation of nociception, acting as a modulator of the interaction between TRPA1 and TRPV1, two molecular sensors and mediators of pain signals in dorsal root ganglia (DRG) neurons. Mechanistically, it weakens their interaction, thereby releasing the inhibition of TRPA1 by TRPV1 and increasing the single-channel open probability of the TRPA1-TRPV1 complex. The polypeptide is Transmembrane protein 100 (Tmem100) (Rattus norvegicus (Rat)).